We begin with the raw amino-acid sequence, 545 residues long: Thermosome subunit alpha (545 aa).

The interval K522–Y545 is disordered. Residues G529–Y545 show a composition bias toward gly residues.

This sequence belongs to the TCP-1 chaperonin family. As to quaternary structure, forms a Heterooligomeric complex of two stacked eight-membered rings. In terms of processing, the N-terminus is blocked.

Its function is as follows. Molecular chaperone; binds unfolded polypeptides in vitro, and has a weak ATPase activity. The sequence is that of Thermosome subunit alpha (thsA) from Thermoplasma acidophilum (strain ATCC 25905 / DSM 1728 / JCM 9062 / NBRC 15155 / AMRC-C165).